Here is a 611-residue protein sequence, read N- to C-terminus: UvrABC system protein C (611 aa).

The GIY-YIG domain occupies 12–96 (DQPGIYQYFD…IKQLKPKYNI (85 aa)). One can recognise a UVR domain in the interval 202-237 (EKILEILNQKMQKYAENLQFEEAAEIRDRIKSIESA).

The protein belongs to the UvrC family. In terms of assembly, interacts with UvrB in an incision complex.

The protein localises to the cytoplasm. Its function is as follows. The UvrABC repair system catalyzes the recognition and processing of DNA lesions. UvrC both incises the 5' and 3' sides of the lesion. The N-terminal half is responsible for the 3' incision and the C-terminal half is responsible for the 5' incision. This is UvrABC system protein C from Nautilia profundicola (strain ATCC BAA-1463 / DSM 18972 / AmH).